The sequence spans 214 residues: Phosphoenolpyruvate guanylyltransferase (214 aa).

Thr139, Gly155, and Ser158 together coordinate phosphoenolpyruvate.

This sequence belongs to the CofC family.

It catalyses the reaction phosphoenolpyruvate + GTP + H(+) = enolpyruvoyl-2-diphospho-5'-guanosine + diphosphate. The protein operates within cofactor biosynthesis; coenzyme F420 biosynthesis. Its function is as follows. Guanylyltransferase that catalyzes the activation of phosphoenolpyruvate (PEP) as enolpyruvoyl-2-diphospho-5'-guanosine, via the condensation of PEP with GTP. It is involved in the biosynthesis of coenzyme F420, a hydride carrier cofactor. This chain is Phosphoenolpyruvate guanylyltransferase, found in Salinispora arenicola (strain CNS-205).